Here is a 132-residue protein sequence, read N- to C-terminus: MVDAFCATWKLTDSQNFDEYMKALGVGFATRQVGNVTKPTVIISQEGGKVVIRTQCTFKNTEINFQLGEEFEETSIDDRNCKSVVRLDGDKLIHVQKWDGKETNCTREIKDGKMVVTLTFGDIVAVRCYEKA.

Valine 2 carries the N-acetylvaline modification. Residue 127–129 (RCY) participates in a fatty acid binding.

Belongs to the calycin superfamily. Fatty-acid binding protein (FABP) family. Expressed in brain and other neural tissues.

It is found in the cytoplasm. Its function is as follows. B-FABP could be involved in the transport of a so far unknown hydrophobic ligand with potential morphogenic activity during CNS development. It is required for the establishment of the radial glial fiber system in developing brain, a system that is necessary for the migration of immature neurons to establish cortical layers. In Mus musculus (Mouse), this protein is Fatty acid-binding protein, brain (Fabp7).